A 147-amino-acid polypeptide reads, in one-letter code: UPF0306 protein YpAngola_A4021 (147 aa).

This sequence belongs to the UPF0306 family.

The polypeptide is UPF0306 protein YpAngola_A4021 (Yersinia pestis bv. Antiqua (strain Angola)).